The chain runs to 530 residues: Autoinducer-2 kinase (530 aa).

The protein belongs to the FGGY kinase family.

The protein localises to the cytoplasm. It catalyses the reaction (S)-4,5-dihydroxypentane-2,3-dione + ATP = (2S)-2-hydroxy-3,4-dioxopentyl phosphate + ADP + H(+). Its function is as follows. Catalyzes the phosphorylation of autoinducer-2 (AI-2) to phospho-AI-2, which subsequently inactivates the transcriptional regulator LsrR and leads to the transcription of the lsr operon. Phosphorylates the ring-open form of (S)-4,5-dihydroxypentane-2,3-dione (DPD), which is the precursor to all AI-2 signaling molecules, at the C5 position. In Escherichia coli (strain K12 / DH10B), this protein is Autoinducer-2 kinase.